A 307-amino-acid chain; its full sequence is Ribosomal RNA small subunit methyltransferase H (307 aa).

Residues 33-35 (GGY), Asp-51, Phe-82, Asp-96, and Gln-103 each bind S-adenosyl-L-methionine.

Belongs to the methyltransferase superfamily. RsmH family.

It is found in the cytoplasm. It catalyses the reaction cytidine(1402) in 16S rRNA + S-adenosyl-L-methionine = N(4)-methylcytidine(1402) in 16S rRNA + S-adenosyl-L-homocysteine + H(+). Specifically methylates the N4 position of cytidine in position 1402 (C1402) of 16S rRNA. The sequence is that of Ribosomal RNA small subunit methyltransferase H from Rickettsia peacockii (strain Rustic).